Here is an 81-residue protein sequence, read N- to C-terminus: Serine rich endogenous peptide 21 (81 aa).

An N-terminal signal peptide occupies residues 1-40 (MLELHFEFIDLNQPKMYKFVVCLLTLSFLLLSGLSNTALA). The SCOOP motif motif lies at 65–79 (KVRVLPSASRRGPGQ). The short motif at 71–73 (SAS) is the SxS motif essential for MIK2 binding element.

This sequence belongs to the serine rich endogenous peptide (SCOOP) phytocytokine family. Interacts with MIK2 (via extracellular leucine-rich repeat domain); this interaction triggers the formation of complex between MIK2 and the BAK1/SERK3 and SERK4 coreceptors, and subsequent BAK1 activation by phosphorylation.

Its subcellular location is the cell membrane. It localises to the secreted. The protein localises to the extracellular space. The protein resides in the apoplast. Its function is as follows. Brassicaceae-specific phytocytokine (plant endogenous peptide released into the apoplast) perceived by MIK2 in a BAK1/SERK3 and SERK4 coreceptors-dependent manner, that modulates various physiological and antimicrobial processes including growth prevention and reactive oxygen species (ROS) response regulation. The polypeptide is Serine rich endogenous peptide 21 (Arabidopsis thaliana (Mouse-ear cress)).